A 493-amino-acid polypeptide reads, in one-letter code: Aspartyl/glutamyl-tRNA(Asn/Gln) amidotransferase subunit B (493 aa).

The interval 268–291 is disordered; it reads HYQEADGSTSKGRPKETAEDYRYF. Residues 280-291 are compositionally biased toward basic and acidic residues; sequence RPKETAEDYRYF.

Belongs to the GatB/GatE family. GatB subfamily. In terms of assembly, heterotrimer of A, B and C subunits.

It carries out the reaction L-glutamyl-tRNA(Gln) + L-glutamine + ATP + H2O = L-glutaminyl-tRNA(Gln) + L-glutamate + ADP + phosphate + H(+). The catalysed reaction is L-aspartyl-tRNA(Asn) + L-glutamine + ATP + H2O = L-asparaginyl-tRNA(Asn) + L-glutamate + ADP + phosphate + 2 H(+). Functionally, allows the formation of correctly charged Asn-tRNA(Asn) or Gln-tRNA(Gln) through the transamidation of misacylated Asp-tRNA(Asn) or Glu-tRNA(Gln) in organisms which lack either or both of asparaginyl-tRNA or glutaminyl-tRNA synthetases. The reaction takes place in the presence of glutamine and ATP through an activated phospho-Asp-tRNA(Asn) or phospho-Glu-tRNA(Gln). The polypeptide is Aspartyl/glutamyl-tRNA(Asn/Gln) amidotransferase subunit B (Corynebacterium glutamicum (strain ATCC 13032 / DSM 20300 / JCM 1318 / BCRC 11384 / CCUG 27702 / LMG 3730 / NBRC 12168 / NCIMB 10025 / NRRL B-2784 / 534)).